A 469-amino-acid chain; its full sequence is 6-phosphogluconate dehydrogenase, NADP(+)-dependent, decarboxylating (469 aa).

NADP(+) contacts are provided by residues G10–G15, N33–S35, V74–A76, and N102. Substrate contacts are provided by residues N102 and S128–G130. K182 (proton acceptor) is an active-site residue. Residue H185–N186 coordinates substrate. E189 serves as the catalytic Proton donor. Residues Y190, K260, R287, R446, and H452 each contribute to the substrate site.

It belongs to the 6-phosphogluconate dehydrogenase family. As to quaternary structure, homodimer.

The enzyme catalyses 6-phospho-D-gluconate + NADP(+) = D-ribulose 5-phosphate + CO2 + NADPH. The protein operates within carbohydrate degradation; pentose phosphate pathway; D-ribulose 5-phosphate from D-glucose 6-phosphate (oxidative stage): step 3/3. In terms of biological role, catalyzes the oxidative decarboxylation of 6-phosphogluconate to ribulose 5-phosphate and CO(2), with concomitant reduction of NADP to NADPH. Is the predominant 6-P-gluconate dehydrogenase isoenzyme in B.subtilis during growth on glucose and gluconate. The polypeptide is 6-phosphogluconate dehydrogenase, NADP(+)-dependent, decarboxylating (gndA) (Bacillus subtilis (strain 168)).